The sequence spans 576 residues: Arginine--tRNA ligase (576 aa).

The 'HIGH' region motif lies at Pro-122–His-132.

This sequence belongs to the class-I aminoacyl-tRNA synthetase family. Monomer.

The protein resides in the cytoplasm. It catalyses the reaction tRNA(Arg) + L-arginine + ATP = L-arginyl-tRNA(Arg) + AMP + diphosphate. This is Arginine--tRNA ligase from Yersinia pestis bv. Antiqua (strain Antiqua).